A 441-amino-acid polypeptide reads, in one-letter code: ATP-dependent protease ATPase subunit HslU (441 aa).

ATP contacts are provided by residues Ile18, 60-65 (GVGKTE), Asp254, Glu319, and Arg391.

The protein belongs to the ClpX chaperone family. HslU subfamily. A double ring-shaped homohexamer of HslV is capped on each side by a ring-shaped HslU homohexamer. The assembly of the HslU/HslV complex is dependent on binding of ATP.

It localises to the cytoplasm. ATPase subunit of a proteasome-like degradation complex; this subunit has chaperone activity. The binding of ATP and its subsequent hydrolysis by HslU are essential for unfolding of protein substrates subsequently hydrolyzed by HslV. HslU recognizes the N-terminal part of its protein substrates and unfolds these before they are guided to HslV for hydrolysis. In Actinobacillus succinogenes (strain ATCC 55618 / DSM 22257 / CCUG 43843 / 130Z), this protein is ATP-dependent protease ATPase subunit HslU.